The chain runs to 269 residues: 4-hydroxy-tetrahydrodipicolinate reductase (269 aa).

Residues 10–15 and Glu-36 contribute to the NAD(+) site; that span reads GSSGRM. Residue Arg-37 participates in NADP(+) binding. Residues 99-101 and 123-126 each bind NAD(+); these read GTT and APNM. The active-site Proton donor/acceptor is His-156. A (S)-2,3,4,5-tetrahydrodipicolinate-binding site is contributed by His-157. Lys-160 functions as the Proton donor in the catalytic mechanism. 166 to 167 is a binding site for (S)-2,3,4,5-tetrahydrodipicolinate; that stretch reads GT.

It belongs to the DapB family.

It is found in the cytoplasm. The enzyme catalyses (S)-2,3,4,5-tetrahydrodipicolinate + NAD(+) + H2O = (2S,4S)-4-hydroxy-2,3,4,5-tetrahydrodipicolinate + NADH + H(+). The catalysed reaction is (S)-2,3,4,5-tetrahydrodipicolinate + NADP(+) + H2O = (2S,4S)-4-hydroxy-2,3,4,5-tetrahydrodipicolinate + NADPH + H(+). It functions in the pathway amino-acid biosynthesis; L-lysine biosynthesis via DAP pathway; (S)-tetrahydrodipicolinate from L-aspartate: step 4/4. In terms of biological role, catalyzes the conversion of 4-hydroxy-tetrahydrodipicolinate (HTPA) to tetrahydrodipicolinate. This chain is 4-hydroxy-tetrahydrodipicolinate reductase, found in Nitrosospira multiformis (strain ATCC 25196 / NCIMB 11849 / C 71).